The following is a 394-amino-acid chain: Na(+)/H(+) antiporter NhaA (394 aa).

11 helical membrane passes run L11–N31, L59–V79, I95–I115, G125–S145, F155–F175, H177–M197, T203–L220, A254–V274, L296–I316, I328–L348, and L365–T385.

The protein belongs to the NhaA Na(+)/H(+) (TC 2.A.33) antiporter family.

The protein localises to the cell inner membrane. The enzyme catalyses Na(+)(in) + 2 H(+)(out) = Na(+)(out) + 2 H(+)(in). Na(+)/H(+) antiporter that extrudes sodium in exchange for external protons. The protein is Na(+)/H(+) antiporter NhaA of Actinobacillus pleuropneumoniae serotype 7 (strain AP76).